The primary structure comprises 491 residues: MGSFLLKKAVGLSNISDLLDKSGIFYNYSTKVLPSFDYDTAGKHIAREDSTWNGKYVIGQPAEVTYSFPKWEGKFNQFGNKNPYEFNELQKEHARKSLDAWSDIANIKFTEVAVGNVDGMKASDVKTDITFGNIYDPNGTFQAYATLPNTYAYGKDLSGQAWFSDYHYAGNTTPELGNYGRLTIIHEIGHTLGLMHPGDYNAGQNVPGYLKSDYAEDSRQYTVMSYWDEYETGAHFQGAYAGAPLLHDISAMQYLYGANTTTRTGDDVYGFNSNTGIDYYTATDSNDKLIFSVWDSGGNDTFDFSGFYQDQLIDLRAGNFSDVGGLQKNVSIAQNVTIENAIGGFGNDIIHGNDADNTLIGGEGDDIIYGHSGNNTIYGGRGQDTLHGGTGSNTFIYKEIADSLVTAADKIMDFKTGIDKIDLSTLIQDTFSSKILNFVDNFTGNAGEATLSYNEVTNASELAINAYGYNYNPDFKIDIVGFVNYETDFIV.

The propeptide occupies 1–16 (MGSFLLKKAVGLSNIS). Residue histidine 186 coordinates Zn(2+). The active site involves glutamate 187. Zn(2+)-binding residues include histidine 190, histidine 196, and tyrosine 226. Positions 263, 265, 295, 297, 298, 300, 337, 339, 344, 346, 348, 353, 355, 357, 361, 362, 364, 366, 370, 373, 384, 388, 389, 391, 402, 409, and 419 each coordinate Ca(2+). Hemolysin-type calcium-binding repeat units lie at residues 342–359 (IGGF…DNTL), 360–377 (IGGE…NNTI), and 378–395 (YGGR…SNTF).

It belongs to the peptidase M10B family. The cofactor is Ca(2+). Zn(2+) is required as a cofactor.

It is found in the secreted. It catalyses the reaction Preferential cleavage of bonds with hydrophobic residues in P1'.. Its activity is regulated as follows. Ca(2+) increases protease activity. Functionally, one of the virulence factors produced during swarmer cell differentiation of the bacteria, which seems to be associated with pathogenesis. The protease activity is limited to IgA1, IgA2, as well as IgG degradation. The polypeptide is Serralysin (zapA) (Proteus mirabilis).